Here is a 430-residue protein sequence, read N- to C-terminus: MSTIRSIHAREILDSRGNPTLEAEVTLEDGSFGRAAVPSGASTGTKEAVELRDGDKTRYLGKGVRKAVDNVNTTIANALKGVEASDQEGLDRRLIDLDGTENKGRLGANALLGVSMAAAHAAAASSKQALWQYLAAKTGVTPSLPVPMMNIINGGAHADNNVDFQEFMVLPVGFTSFSEALRAGTEIFHSLKSVLKGHGLSTAVGDEGGFAPDFRSNVEALDTILEAIGKAGYTAGEDVLLGLDVASSEFFENGKYNLVGENKRLTSEQFVDFLADWAAQYPIITIEDGLAENDWAGWKLLTDRIGKKVQLVGDDLFVTNPKIFQEGIDSGTANAILIKVNQIGTLSETLEAIAMADRAGYAAVVSHRSGETEDTTIADISVATTATQIKTGSLCRSDRVAKYNQLLRIEEALGAGARYAGRDAFVSLKR.

Q165 is a binding site for (2R)-2-phosphoglycerate. Catalysis depends on E207, which acts as the Proton donor. Positions 244, 287, and 314 each coordinate Mg(2+). (2R)-2-phosphoglycerate is bound by residues K339, R368, S369, and K390. The Proton acceptor role is filled by K339.

It belongs to the enolase family. As to quaternary structure, component of the RNA degradosome, a multiprotein complex involved in RNA processing and mRNA degradation. Requires Mg(2+) as cofactor.

The protein localises to the cytoplasm. The protein resides in the secreted. It is found in the cell surface. It carries out the reaction (2R)-2-phosphoglycerate = phosphoenolpyruvate + H2O. It participates in carbohydrate degradation; glycolysis; pyruvate from D-glyceraldehyde 3-phosphate: step 4/5. In terms of biological role, catalyzes the reversible conversion of 2-phosphoglycerate (2-PG) into phosphoenolpyruvate (PEP). It is essential for the degradation of carbohydrates via glycolysis. In Stenotrophomonas maltophilia (strain R551-3), this protein is Enolase.